The primary structure comprises 943 residues: Isoleucine--tRNA ligase (943 aa).

Positions 58 to 68 (PYANGKIHIGH) match the 'HIGH' region motif. Glutamate 567 lines the L-isoleucyl-5'-AMP pocket. The 'KMSKS' region motif lies at 608 to 612 (KMSKS). Residue lysine 611 participates in ATP binding. Zn(2+)-binding residues include cysteine 906, cysteine 909, cysteine 926, and cysteine 929.

The protein belongs to the class-I aminoacyl-tRNA synthetase family. IleS type 1 subfamily. As to quaternary structure, monomer. Zn(2+) serves as cofactor.

The protein resides in the cytoplasm. The catalysed reaction is tRNA(Ile) + L-isoleucine + ATP = L-isoleucyl-tRNA(Ile) + AMP + diphosphate. In terms of biological role, catalyzes the attachment of isoleucine to tRNA(Ile). As IleRS can inadvertently accommodate and process structurally similar amino acids such as valine, to avoid such errors it has two additional distinct tRNA(Ile)-dependent editing activities. One activity is designated as 'pretransfer' editing and involves the hydrolysis of activated Val-AMP. The other activity is designated 'posttransfer' editing and involves deacylation of mischarged Val-tRNA(Ile). The polypeptide is Isoleucine--tRNA ligase (Pseudomonas putida (strain GB-1)).